Consider the following 695-residue polypeptide: Elongation factor G 1 (695 aa).

The 279-residue stretch at 6-284 folds into the tr-type G domain; that stretch reads KKVRNIGISA…VTRYLPCPAD (279 aa). Residues 15-22, 82-86, and 136-139 contribute to the GTP site; these read AHIDSGKT, DTPGH, and NKCD.

It belongs to the TRAFAC class translation factor GTPase superfamily. Classic translation factor GTPase family. EF-G/EF-2 subfamily.

It is found in the cytoplasm. Catalyzes the GTP-dependent ribosomal translocation step during translation elongation. During this step, the ribosome changes from the pre-translocational (PRE) to the post-translocational (POST) state as the newly formed A-site-bound peptidyl-tRNA and P-site-bound deacylated tRNA move to the P and E sites, respectively. Catalyzes the coordinated movement of the two tRNA molecules, the mRNA and conformational changes in the ribosome. In Syntrophus aciditrophicus (strain SB), this protein is Elongation factor G 1.